We begin with the raw amino-acid sequence, 1014 residues long: Pre-mRNA-processing ATP-dependent RNA helicase prp11 (1014 aa).

A compositionally biased stretch (basic residues) spans 1 to 11 (MSRRTRSRSPP). The disordered stretch occupies residues 1 to 149 (MSRRTRSRSP…SRFDRTERVG (149 aa)). Composition is skewed to basic and acidic residues over residues 15 to 87 (YNRE…EYAR) and 106 to 121 (RHAEEKEVDNKTKSDE). Positions 418-446 (TSWSQCGLSAQTISVINSLGYEKPTSIQA) match the Q motif motif. The region spanning 449–627 (IPAITSGRDV…RKVLKKPVEI (179 aa)) is the Helicase ATP-binding domain. 462 to 469 (AKTGSGKT) lines the ATP pocket. The short motif at 575–578 (DEAD) is the DEAD box element. The 165-residue stretch at 638–802 (EVEQIVEVRP…PVPKELQTLA (165 aa)) folds into the Helicase C-terminal domain. The segment at 815-875 (KAAGGGFGGK…PEKSTGDPTL (61 aa)) is disordered. Basic and acidic residues-rich tracts occupy residues 827 to 838 (SRLDETRNAERK) and 855 to 875 (AEAKSPLEKITPEKSTGDPTL).

The protein belongs to the DEAD box helicase family. DDX46/PRP5 subfamily.

It localises to the nucleus. The catalysed reaction is ATP + H2O = ADP + phosphate + H(+). Its function is as follows. ATP-dependent RNA helicase involved in pre-spliceosome/complex A assembly and mRNA splicing. Bridges U1 and U2 snRNPs during pre-spliceosome assembly and enables stable U2 snRNP association with intron RNA. Through its helicase activity probably catalyzes an ATP-dependent conformational change of U2 snRNP. This is Pre-mRNA-processing ATP-dependent RNA helicase prp11 (prp11) from Schizosaccharomyces pombe (strain 972 / ATCC 24843) (Fission yeast).